The sequence spans 474 residues: Bifunctional protein HldE (474 aa).

Positions 1-318 (MKLSMPRFDQ…RAIQREEGSE (318 aa)) are ribokinase. 194 to 197 (NLSE) serves as a coordination point for ATP. The active site involves aspartate 263. The cytidylyltransferase stretch occupies residues 343 to 474 (FTNGCFDILH…AIVEKIRGQG (132 aa)).

The protein in the N-terminal section; belongs to the carbohydrate kinase PfkB family. In the C-terminal section; belongs to the cytidylyltransferase family. In terms of assembly, homodimer.

It carries out the reaction D-glycero-beta-D-manno-heptose 7-phosphate + ATP = D-glycero-beta-D-manno-heptose 1,7-bisphosphate + ADP + H(+). It catalyses the reaction D-glycero-beta-D-manno-heptose 1-phosphate + ATP + H(+) = ADP-D-glycero-beta-D-manno-heptose + diphosphate. The protein operates within nucleotide-sugar biosynthesis; ADP-L-glycero-beta-D-manno-heptose biosynthesis; ADP-L-glycero-beta-D-manno-heptose from D-glycero-beta-D-manno-heptose 7-phosphate: step 1/4. It functions in the pathway nucleotide-sugar biosynthesis; ADP-L-glycero-beta-D-manno-heptose biosynthesis; ADP-L-glycero-beta-D-manno-heptose from D-glycero-beta-D-manno-heptose 7-phosphate: step 3/4. In terms of biological role, catalyzes the phosphorylation of D-glycero-D-manno-heptose 7-phosphate at the C-1 position to selectively form D-glycero-beta-D-manno-heptose-1,7-bisphosphate. Functionally, catalyzes the ADP transfer from ATP to D-glycero-beta-D-manno-heptose 1-phosphate, yielding ADP-D-glycero-beta-D-manno-heptose. This chain is Bifunctional protein HldE, found in Pseudomonas savastanoi pv. phaseolicola (strain 1448A / Race 6) (Pseudomonas syringae pv. phaseolicola (strain 1448A / Race 6)).